A 285-amino-acid chain; its full sequence is Bis(5'-nucleosyl)-tetraphosphatase, symmetrical (285 aa).

Belongs to the Ap4A hydrolase family.

The enzyme catalyses P(1),P(4)-bis(5'-adenosyl) tetraphosphate + H2O = 2 ADP + 2 H(+). Hydrolyzes diadenosine 5',5'''-P1,P4-tetraphosphate to yield ADP. In Pseudomonas entomophila (strain L48), this protein is Bis(5'-nucleosyl)-tetraphosphatase, symmetrical.